The chain runs to 652 residues: MSQTHKHAIPANIADRCLINPEQYETKYKQSINDPDTFWGEQGKILDWITPYQKVKNTSFAPGNVSIKWYEDGTLNLAANCLDRHLQENGDRTAIIWEGDDTSQSKHISYRELHRDVCRFANTLLDLGIKKGDVVAIYMPMVPEAAVAMLACARIGAVHSVIFGGFSPEAVAGRIIDSSSRLVITADEGVRAGRSIPLKKNVDDALKNPNVTSVEHVIVLKRTGSDIDWQEGRDLWWRDLIEKASPEHQPEAMNAEDPLFILYTSGSTGKPKGVLHTTGGYLVYAATTFKYVFDYHPGDIYWCTADVGWVTGHSYLLYGPLACGATTLMFEGVPNWPTPARMCQVVDKHQVNILYTAPTAIRALMAEGDKAIEGTDRSSLRILGSVGEPINPEAWEWYWKKIGKEKCPVVDTWWQTETGGFMITPLPGAIELKAGSATRPFFGVQPALVDNEGHPQEGATEGNLVITDSWPGQARTLFGDHERFEQTYFSTFKNMYFSGDGARRDEDGYYWITGRVDDVLNVSGHRLGTAEIESALVAHPKIAEAAVVGIPHAIKGQAIYAYVTLNHGEEPSPELYAEVRNWVRKEIGPLATPDVLHWTDSLPKTRSGKIMRRILRKIAAGDTSNLGDTSTLADPGVVEKLLEEKQAIAMPS.

CoA is bound by residues R191–R194, T311, and N335. Residues G387–P389, D411–T416, D500, and R515 each bind ATP. A CoA-binding site is contributed by S523. Position 526 (R526) interacts with ATP. 3 residues coordinate Mg(2+): V537, H539, and I542. Position 584 (R584) interacts with CoA. Position 609 is an N6-acetyllysine; by Pat (K609).

The protein belongs to the ATP-dependent AMP-binding enzyme family. As to quaternary structure, monomer. Mg(2+) serves as cofactor. Acetylated. Deacetylation by the SIR2-homolog deacetylase activates the enzyme.

It catalyses the reaction acetate + ATP + CoA = acetyl-CoA + AMP + diphosphate. In terms of biological role, catalyzes the conversion of acetate into acetyl-CoA (AcCoA), an essential intermediate at the junction of anabolic and catabolic pathways. Acs undergoes a two-step reaction. In the first half reaction, Acs combines acetate with ATP to form acetyl-adenylate (AcAMP) intermediate. In the second half reaction, it can then transfer the acetyl group from AcAMP to the sulfhydryl group of CoA, forming the product AcCoA. Required for acetate recapture but not for acetate excretion when this organism is grown on ethanolamine. Enables the cell to use acetate during aerobic growth to generate energy via the TCA cycle, and biosynthetic compounds via the glyoxylate shunt. Acetylates CheY, the response regulator involved in flagellar movement and chemotaxis. The sequence is that of Acetyl-coenzyme A synthetase from Salmonella typhimurium (strain LT2 / SGSC1412 / ATCC 700720).